A 264-amino-acid chain; its full sequence is S-adenosylmethionine decarboxylase proenzyme (264 aa).

Catalysis depends on S112, which acts as the Schiff-base intermediate with substrate; via pyruvic acid. Position 112 is a pyruvic acid (Ser); by autocatalysis (S112). Residue H117 is the Proton acceptor; for processing activity of the active site. Residue C140 is the Proton donor; for catalytic activity of the active site.

Belongs to the prokaryotic AdoMetDC family. Type 2 subfamily. In terms of assembly, heterooctamer of four alpha and four beta chains arranged as a tetramer of alpha/beta heterodimers. The cofactor is pyruvate. In terms of processing, is synthesized initially as an inactive proenzyme. Formation of the active enzyme involves a self-maturation process in which the active site pyruvoyl group is generated from an internal serine residue via an autocatalytic post-translational modification. Two non-identical subunits are generated from the proenzyme in this reaction, and the pyruvate is formed at the N-terminus of the alpha chain, which is derived from the carboxyl end of the proenzyme. The post-translation cleavage follows an unusual pathway, termed non-hydrolytic serinolysis, in which the side chain hydroxyl group of the serine supplies its oxygen atom to form the C-terminus of the beta chain, while the remainder of the serine residue undergoes an oxidative deamination to produce ammonia and the pyruvoyl group blocking the N-terminus of the alpha chain.

It carries out the reaction S-adenosyl-L-methionine + H(+) = S-adenosyl 3-(methylsulfanyl)propylamine + CO2. It functions in the pathway amine and polyamine biosynthesis; S-adenosylmethioninamine biosynthesis; S-adenosylmethioninamine from S-adenosyl-L-methionine: step 1/1. Functionally, catalyzes the decarboxylation of S-adenosylmethionine to S-adenosylmethioninamine (dcAdoMet), the propylamine donor required for the synthesis of the polyamines spermine and spermidine from the diamine putrescine. This Yersinia pseudotuberculosis serotype O:1b (strain IP 31758) protein is S-adenosylmethionine decarboxylase proenzyme.